Here is a 360-residue protein sequence, read N- to C-terminus: Josephin-like protein (360 aa).

The Josephin domain occupies 5 to 192 (ESKIYHERQR…NQLPLASNYR (188 aa)). The active-site Nucleophile is cysteine 18. The Proton acceptor role is filled by histidine 129.

The catalysed reaction is Thiol-dependent hydrolysis of ester, thioester, amide, peptide and isopeptide bonds formed by the C-terminal Gly of ubiquitin (a 76-residue protein attached to proteins as an intracellular targeting signal).. In terms of biological role, may act as a deubiquitinating enzyme. The polypeptide is Josephin-like protein (Arabidopsis thaliana (Mouse-ear cress)).